The primary structure comprises 149 residues: Transcriptional repressor NrdR (149 aa).

A zinc finger lies at 3-34 (CPFCSATDTKVIDSRLVAEGHQVRRRRECTEC). The ATP-cone domain occupies 49–139 (PRVIKRDGSR…VYRAFEDVSE (91 aa)).

This sequence belongs to the NrdR family. It depends on Zn(2+) as a cofactor.

Its function is as follows. Negatively regulates transcription of bacterial ribonucleotide reductase nrd genes and operons by binding to NrdR-boxes. The polypeptide is Transcriptional repressor NrdR (Shewanella baltica (strain OS223)).